Here is a 91-residue protein sequence, read N- to C-terminus: Bacterial microcompartment shell protein PduJ (91 aa).

In terms of domain architecture, BMC spans Ala-4–Pro-88.

The protein belongs to the bacterial microcompartments protein family. In terms of assembly, homohexamer with a central pore. Interacts with PduP, which targets PduP to the BMC. Interacts with shell protein PduA.

It localises to the bacterial microcompartment. Its pathway is polyol metabolism; 1,2-propanediol degradation. One of the major shell proteins of the bacterial microcompartment (BMC) dedicated to 1,2-propanediol (1,2-PD) degradation. At least one of PduA or PduJ is required for BMC assembly; it must be encoded as the first gene in the pdu operon. Required for structural integrity of BMCs and to mitigate propionaldehyde toxicity, probably joins facets responsible for BMC closure. Probably the hub for binding multiple enzymes to the interior of the BMC. In terms of biological role, expression of a cosmid containing the full 21-gene pdu operon in E.coli allows E.coli to grow on 1,2-PD with the appearance of BMCs in its cytoplasm. Overexpression of this protein leads to an internal structure with a whorled architecture. Functionally, the 1,2-PD-specific bacterial microcompartment (BMC) concentrates low levels of 1,2-PD catabolic enzymes, concentrates volatile reaction intermediates thus enhancing pathway flux and keeps the level of toxic, mutagenic propionaldehyde low. This Citrobacter freundii protein is Bacterial microcompartment shell protein PduJ.